Reading from the N-terminus, the 1108-residue chain is MSIATTPIETPKSPKSTEPQVRKRKKVSTVCTNCRKRKIRCDRQHPCNNCIKSKKHNACVYDDGQVSPANFSTNGSSHGNTVPESRPYEESARIPIRFDAEAPRKKSKPNTPNNERKNSKKSPDNTVANNQQTASENEVTITLSELNMLKQRLQNIEANINAQSNPQSNPSYVPQTPAYPTQPNILPPPVSFNSWSPKQSNERVMFSPQQRLTTNYNVSHTRGQSPSIQLPPLSFKDTPRASIDSAPLYSEMSPPRSDLIASSLTSPESIQMSVSGDVVGVNPYLNETETINFYDGYTSICVRDFRRVNHGPFAWSSLMRKDKALSSLWNHILKKKEKKNVASQTFVFGQDVHEISQENTQLVASESNESETKFKKKTLETFGFNDVVPYDILKKKLQTQINKTTSPLGLTLYEEQVNMELQLVDRIHQQLPKKKVLWKLIDRFFSLLYPFMPFLDEIDFRESVTKIIGETEYKDEKIKELKVEKRLDLAVIGVLLIILRMSYLSLFCNKESVNEMRLKTTDPSPEAQDMKYLLQNPIGISLIDSAQNCLQYFDIFRKTSMPVLQCAYFLQLYHIFAPEDGDDGDGADTYALNSMVVRMAYSMGLNREPDNFKDVLNDKRQNHLGRKIWHFLVIGDVHNSYAFGTPKLIGDDFYDTKVPFIEEGNENLIDKSLDQYVTKSVFPGYFSIYNSVDQILKLILSVSRRSKVSEICKILNQFEIGIAEQYGTLSDCLKPKENLIHIFARNMPVKMYISLKSFLVSVYFHLFLYYEHKNDSLSFFYLRKILKTGAGDIMPHYFELLGNSEVVCDMVINPKLIQIIHKANQINIALIIRVNMSIYRMKNSQHHAENCKKDDFYYSYYKELCKFSSCLTRCAEVGIAAVSKLSTRYYYAWKITKGHNFLLKTITSMEFYEKESTNAQEITLPKYKLEQIADLENICEVALNKLGKTSVMGDEFCSNVNYKKYKGDQTYSTSSESSSTPNKDSPLDSRKYTNDFGLDLVNNQEIDKIWLQMLSLKSEEAQQQRQQESQPFTSSQSQSQSPLTSANQGYMPRPESRRGSYYGNTPFALENLNFDGFGGQSKSSNNGEADLSSFDFFVDLPFDQLFTN.

Over residues 1–19 the composition is skewed to polar residues; it reads MSIATTPIETPKSPKSTEP. Residues 1–27 form a disordered region; the sequence is MSIATTPIETPKSPKSTEPQVRKRKKV. The zn(2)-C6 fungal-type DNA-binding region spans 31–59; that stretch reads CTNCRKRKIRCDRQHPCNNCIKSKKHNAC. A compositionally biased stretch (polar residues) spans 68–83; sequence PANFSTNGSSHGNTVP. Disordered regions lie at residues 68–138, 968–990, and 1021–1064; these read PANF…SENE, DQTY…LDSR, and AQQQ…YYGN. 2 stretches are compositionally biased toward basic and acidic residues: residues 86–104 and 114–123; these read RPYE…EAPR and NERKNSKKSP. Over residues 124–138 the composition is skewed to polar residues; sequence DNTVANNQQTASENE. Positions 134–165 form a coiled coil; it reads ASENEVTITLSELNMLKQRLQNIEANINAQSN. Composition is skewed to low complexity over residues 970 to 980 and 1023 to 1041; these read TYSTSSESSST and QQRQ…QSQS.

The protein localises to the nucleus. Functionally, transcription factor that acts as the central regulator of the MDR1 efflux pump. Other target genes include those encoding oxidoreductases, whose up-regulation in fluconazole-resistant isolates may help to prevent cell damage resulting from the generation of toxic molecules in the presence of fluconazole and thereby contribute to drug resistance. This chain is Multidrug resistance regulator 1, found in Candida albicans (strain SC5314 / ATCC MYA-2876) (Yeast).